Consider the following 78-residue polypeptide: uncharacterized protein (78 aa).

A helical membrane pass occupies residues 44–66 (ALYSLGFFLCTTIVIFSNIKFVV).

It belongs to the TatC family.

Its subcellular location is the plastid. The protein resides in the chloroplast membrane. This is an uncharacterized protein from Dictyota dichotoma.